The sequence spans 204 residues: Recombination protein RecR (204 aa).

Residues 58 to 75 (CSVCQNITDVGVDPCALC) form a C4-type zinc finger. The Toprim domain maps to 83–181 (SVICVVESPV…HVTKIARGIP (99 aa)).

It belongs to the RecR family.

Functionally, may play a role in DNA repair. It seems to be involved in an RecBC-independent recombinational process of DNA repair. It may act with RecF and RecO. The sequence is that of Recombination protein RecR from Pelodictyon phaeoclathratiforme (strain DSM 5477 / BU-1).